Here is an 89-residue protein sequence, read N- to C-terminus: Dynein light chain LC6, flagellar outer arm (89 aa).

The protein belongs to the dynein light chain family. As to quaternary structure, consists of at least 3 heavy chains (alpha, beta and gamma), 2 intermediate chains and 8 light chains.

Its subcellular location is the cytoplasm. It is found in the cytoskeleton. The protein localises to the flagellum axoneme. This Heliocidaris crassispina (Sea urchin) protein is Dynein light chain LC6, flagellar outer arm.